We begin with the raw amino-acid sequence, 1166 residues long: IQ domain-containing protein N (1166 aa).

Residues 1-19 (MQPATQLQFTNHLSPNGQC) show a composition bias toward polar residues. Positions 1-56 (MQPATQLQFTNHLSPNGQCILQPPPTPSLPDKMEKAPPQPQHEGLKSEEHLPQQPA) are disordered. One can recognise an IQ 1 domain in the interval 89 to 118 (HARAATLIQANWRGYRLRQKLISQMTAAKA). Disordered regions lie at residues 431 to 450 (VCPG…VATP), 769 to 797 (LSAP…TTQG), and 829 to 848 (DSGA…PCQE). IQ domains follow at residues 907–932 (AVTT…RRAT), 928–955 (HRRA…RATT), 952–979 (RATT…MLHP), 1091–1119 (RDKA…MAAK), and 1114–1143 (QQMA…LLGP). Positions 1145 to 1166 (DPWSSSQHMHWASSQHTHWPGI) are disordered. Residues 1147–1166 (WSSSQHMHWASSQHTHWPGI) are compositionally biased toward polar residues.

As to quaternary structure, interacts with calmodulin.

Functionally, essential for spermiogenesis and fertilization. May be required for manchette assembly in elongating spermatids. The protein is IQ domain-containing protein N (IQCN) of Macaca fascicularis (Crab-eating macaque).